A 119-amino-acid chain; its full sequence is Large ribosomal subunit protein bL20 (119 aa).

It belongs to the bacterial ribosomal protein bL20 family.

Its function is as follows. Binds directly to 23S ribosomal RNA and is necessary for the in vitro assembly process of the 50S ribosomal subunit. It is not involved in the protein synthesizing functions of that subunit. The polypeptide is Large ribosomal subunit protein bL20 (Acidithiobacillus ferrooxidans (strain ATCC 23270 / DSM 14882 / CIP 104768 / NCIMB 8455) (Ferrobacillus ferrooxidans (strain ATCC 23270))).